A 386-amino-acid chain; its full sequence is Methylthioribose-1-phosphate isomerase (386 aa).

Catalysis depends on Asp255, which acts as the Proton donor.

This sequence belongs to the eIF-2B alpha/beta/delta subunits family. MtnA subfamily.

The protein localises to the cytoplasm. It localises to the nucleus. It carries out the reaction 5-(methylsulfanyl)-alpha-D-ribose 1-phosphate = 5-(methylsulfanyl)-D-ribulose 1-phosphate. Its pathway is amino-acid biosynthesis; L-methionine biosynthesis via salvage pathway; L-methionine from S-methyl-5-thio-alpha-D-ribose 1-phosphate: step 1/6. Its function is as follows. Catalyzes the interconversion of methylthioribose-1-phosphate (MTR-1-P) into methylthioribulose-1-phosphate (MTRu-1-P). The sequence is that of Methylthioribose-1-phosphate isomerase from Trypanosoma brucei brucei (strain 927/4 GUTat10.1).